The following is a 188-amino-acid chain: MGVNIRHNKDRKVWRKEPKSQDIYLRLLVKLYRFLARRTNSTFNQVVLKRLFLSRTNWPPLSLSRMIRKMKLPGQENKTPVVVGTITDDVRVQEVPKLKVCALHVTSRACSRILKAGGKILTFDQLALDSPKGRGTGLLSGPRKGREVYRHFGKAPRTPHSHTKPYVRSKGRKFERARGRWASRGYKN.

A Glycyl lysine isopeptide (Lys-Gly) (interchain with G-Cter in SUMO2) cross-link involves residue lysine 119. Serine 130 carries the phosphoserine modification. The segment at 150 to 188 (RHFGKAPRTPHSHTKPYVRSKGRKFERARGRWASRGYKN) is disordered. Composition is skewed to basic residues over residues 151–171 (HFGKAPRTPHSHTKPYVRSKG) and 179–188 (GRWASRGYKN). Phosphothreonine is present on threonine 158. A Glycyl lysine isopeptide (Lys-Gly) (interchain with G-Cter in SUMO2) cross-link involves residue lysine 164.

Belongs to the eukaryotic ribosomal protein eL18 family. In terms of assembly, component of the large ribosomal subunit.

Its subcellular location is the cytoplasm. It is found in the cytosol. It localises to the rough endoplasmic reticulum. Functionally, component of the large ribosomal subunit. The ribosome is a large ribonucleoprotein complex responsible for the synthesis of proteins in the cell. This Oryctolagus cuniculus (Rabbit) protein is Large ribosomal subunit protein eL18 (RPL18).